The following is a 102-amino-acid chain: Glutaredoxin-C14 (102 aa).

One can recognise a Glutaredoxin domain in the interval Met-1–His-101. Cys-21 and Cys-24 form a disulfide bridge.

This sequence belongs to the glutaredoxin family. CC-type subfamily.

The protein localises to the cytoplasm. Functionally, has a glutathione-disulfide oxidoreductase activity in the presence of NADPH and glutathione reductase. Reduces low molecular weight disulfides and proteins. The chain is Glutaredoxin-C14 (GRXC14) from Arabidopsis thaliana (Mouse-ear cress).